The primary structure comprises 62 residues: Large ribosomal subunit protein bL28 (62 aa).

Belongs to the bacterial ribosomal protein bL28 family.

This Bacillus velezensis (strain DSM 23117 / BGSC 10A6 / LMG 26770 / FZB42) (Bacillus amyloliquefaciens subsp. plantarum) protein is Large ribosomal subunit protein bL28.